A 233-amino-acid chain; its full sequence is Rab-like protein 3 (233 aa).

The tract at residues Met-1 to Asp-233 is small GTPase-like. GTP is bound by residues Gly-16–Ser-21, Lys-148–Asp-150, and Asp-179–Cys-180.

This sequence belongs to the small GTPase superfamily. Rab family. As to quaternary structure, homodimer.

Functionally, required for KRAS signaling regulation and modulation of cell proliferation. Regulator of KRAS prenylation, and probably prenylation of other small GTPases. Required for lymphocyte development and function. Not required for myeloid cell development. This Danio rerio (Zebrafish) protein is Rab-like protein 3 (rabl3).